The primary structure comprises 386 residues: Succinate--CoA ligase [ADP-forming] subunit beta (386 aa).

The region spanning 9-244 (KELLRKYGVV…FDEEDADEIE (236 aa)) is the ATP-grasp domain. Residues Lys-46, 53 to 55 (GRG), Glu-99, Ala-102, and Glu-107 contribute to the ATP site. Mg(2+) contacts are provided by Asn-199 and Asp-213. Substrate-binding positions include Asn-264 and 321–323 (GIM).

It belongs to the succinate/malate CoA ligase beta subunit family. As to quaternary structure, heterotetramer of two alpha and two beta subunits. Requires Mg(2+) as cofactor.

It carries out the reaction succinate + ATP + CoA = succinyl-CoA + ADP + phosphate. The catalysed reaction is GTP + succinate + CoA = succinyl-CoA + GDP + phosphate. The protein operates within carbohydrate metabolism; tricarboxylic acid cycle; succinate from succinyl-CoA (ligase route): step 1/1. Functionally, succinyl-CoA synthetase functions in the citric acid cycle (TCA), coupling the hydrolysis of succinyl-CoA to the synthesis of either ATP or GTP and thus represents the only step of substrate-level phosphorylation in the TCA. The beta subunit provides nucleotide specificity of the enzyme and binds the substrate succinate, while the binding sites for coenzyme A and phosphate are found in the alpha subunit. This Aromatoleum aromaticum (strain DSM 19018 / LMG 30748 / EbN1) (Azoarcus sp. (strain EbN1)) protein is Succinate--CoA ligase [ADP-forming] subunit beta.